We begin with the raw amino-acid sequence, 727 residues long: Probable glutamate carboxypeptidase ARB_02390 (727 aa).

Residues 1–18 (MIVKSLSLLALAAATVEG) form the signal peptide. N60 and N80 each carry an N-linked (GlcNAc...) asparagine glycan. Positions 158 to 296 (ATAEYVYVGR…ISQLDAQPIL (139 aa)) constitute a PA domain. Substrate is bound at residue R197. Residue N223 is glycosylated (N-linked (GlcNAc...) asparagine). The segment at 255 to 279 (FPGDPTTPGYPSRPDSPRKDKSPVV) is disordered. Residues T261 and Y264 each coordinate Ca(2+). Residues 266–565 (SRPDSPRKDK…QFLGLLGYHL (300 aa)) are NAALADase. N-linked (GlcNAc...) asparagine glycans are attached at residues N310, N319, and N353. Residue H366 participates in Zn(2+) binding. E414 (for NAALADase activity) is an active-site residue. E415 lines the Zn(2+) pocket. E423 and E426 together coordinate Ca(2+). Position 443 (D443) interacts with Zn(2+). Substrate contacts are provided by residues 516–518 (TGA) and Y530. Position 531 (H531) interacts with Zn(2+). The active-site Charge relay system is the S604. The N-linked (GlcNAc...) asparagine glycan is linked to N614. H665 functions as the Charge relay system in the catalytic mechanism. 675–676 (GY) contacts substrate. N-linked (GlcNAc...) asparagine glycosylation is present at N692.

This sequence belongs to the peptidase M28 family. M28B subfamily. The cofactor is Zn(2+).

Its subcellular location is the secreted. It carries out the reaction Release of an unsubstituted, C-terminal glutamyl residue, typically from Ac-Asp-Glu or folylpoly-gamma-glutamates.. Its function is as follows. Has both folate hydrolase and N-acetylated-alpha-linked-acidic dipeptidase (NAALADase) activity. Also exhibits a dipeptidyl-peptidase IV type activity. The protein is Probable glutamate carboxypeptidase ARB_02390 of Arthroderma benhamiae (strain ATCC MYA-4681 / CBS 112371) (Trichophyton mentagrophytes).